A 444-amino-acid chain; its full sequence is 23S rRNA (uracil(1939)-C(5))-methyltransferase RlmD (444 aa).

In terms of domain architecture, TRAM spans 5 to 64; that stretch reads KPKLNLTSQTARIVNLSHDGRGIARVNGKATFIQGALPGEVVEFQYTRIKKDFDEGKLLS. The [4Fe-4S] cluster site is built by cysteine 77, cysteine 83, cysteine 86, and cysteine 166. S-adenosyl-L-methionine contacts are provided by glutamine 276, phenylalanine 305, asparagine 310, glutamate 326, asparagine 353, and aspartate 374. The active-site Nucleophile is the cysteine 400.

It belongs to the class I-like SAM-binding methyltransferase superfamily. RNA M5U methyltransferase family. RlmD subfamily.

It catalyses the reaction uridine(1939) in 23S rRNA + S-adenosyl-L-methionine = 5-methyluridine(1939) in 23S rRNA + S-adenosyl-L-homocysteine + H(+). In terms of biological role, catalyzes the formation of 5-methyl-uridine at position 1939 (m5U1939) in 23S rRNA. This is 23S rRNA (uracil(1939)-C(5))-methyltransferase RlmD from Legionella pneumophila (strain Corby).